Here is a 313-residue protein sequence, read N- to C-terminus: tRNA dimethylallyltransferase (313 aa).

Residue 9-16 participates in ATP binding; it reads GPTATGKS. Substrate is bound at residue 11–16; the sequence is TATGKS.

The protein belongs to the IPP transferase family. In terms of assembly, monomer. Mg(2+) is required as a cofactor.

It catalyses the reaction adenosine(37) in tRNA + dimethylallyl diphosphate = N(6)-dimethylallyladenosine(37) in tRNA + diphosphate. Catalyzes the transfer of a dimethylallyl group onto the adenine at position 37 in tRNAs that read codons beginning with uridine, leading to the formation of N6-(dimethylallyl)adenosine (i(6)A). In Nocardia farcinica (strain IFM 10152), this protein is tRNA dimethylallyltransferase.